Here is a 258-residue protein sequence, read N- to C-terminus: Indole-3-glycerol phosphate synthase (258 aa).

Belongs to the TrpC family.

The enzyme catalyses 1-(2-carboxyphenylamino)-1-deoxy-D-ribulose 5-phosphate + H(+) = (1S,2R)-1-C-(indol-3-yl)glycerol 3-phosphate + CO2 + H2O. It functions in the pathway amino-acid biosynthesis; L-tryptophan biosynthesis; L-tryptophan from chorismate: step 4/5. This is Indole-3-glycerol phosphate synthase from Nautilia profundicola (strain ATCC BAA-1463 / DSM 18972 / AmH).